Consider the following 537-residue polypeptide: O-phosphoserine--tRNA(Cys) ligase (537 aa).

Residues 186 to 188 (HMT), 231 to 233 (SAS), 273 to 274 (YY), and Asn-317 contribute to the substrate site.

Belongs to the class-II aminoacyl-tRNA synthetase family. O-phosphoseryl-tRNA(Cys) synthetase subfamily. As to quaternary structure, homotetramer. Interacts with SepCysS.

The catalysed reaction is tRNA(Cys) + O-phospho-L-serine + ATP = O-phospho-L-seryl-tRNA(Cys) + AMP + diphosphate. Catalyzes the attachment of O-phosphoserine (Sep) to tRNA(Cys). In Methanococcus maripaludis (strain C6 / ATCC BAA-1332), this protein is O-phosphoserine--tRNA(Cys) ligase.